The following is a 1192-amino-acid chain: DNA ligase 1 (1192 aa).

2 disordered regions span residues 29–257 (ELNK…KEKE) and 280–517 (EKEL…KSTQ). Basic and acidic residues predominate over residues 42-56 (EAVVKEKVEKKEKKE). Over residues 70-113 (EEEEEEQEEQDGEEEQEEEEEYQQQDEEIEEDINGEEEMELDEN) the composition is skewed to acidic residues. The segment covering 141–155 (KTIENKETKKPEKQS) has biased composition (basic and acidic residues). Over residues 172-198 (DDEEDEEDENKTDDNDLDDMLDDDSDN) the composition is skewed to acidic residues. Basic and acidic residues-rich tracts occupy residues 199–257 (EKDS…KEKE) and 280–368 (EKEL…RANA). 2 stretches are compositionally biased toward low complexity: residues 371-382 (KSSVPTSTSKNS) and 410-434 (STTT…ISSP). Residues 435 to 467 (SKKEEKEVITSKKQVEATKVEVKKEKEKEKEKE) are compositionally biased toward basic and acidic residues. Over residues 468 to 511 (KEDDEEEEEEEEDDDEKLEDIDEEEYEEEEEEDEEGISENEEEE) the composition is skewed to acidic residues. The interaction with target DNA stretch occupies residues 724 to 733 (KLRIGLAERS). An ATP-binding site is contributed by glutamate 842. The N6-AMP-lysine intermediate role is filled by lysine 844. The ATP site is built by arginine 849 and arginine 865. Residue glutamate 897 coordinates Mg(2+). Residues 918–920 (ARK) are interaction with target DNA. Glutamate 996 contacts Mg(2+). Residues lysine 1001, arginine 1014, and lysine 1020 each contribute to the ATP site. Residues 1157–1192 (DKSPEDATSSDQVVDMYQNQKINSQSSKINEKDEDY) are disordered. Residues 1162–1184 (DATSSDQVVDMYQNQKINSQSSK) are compositionally biased toward polar residues.

It belongs to the ATP-dependent DNA ligase family. It depends on Mg(2+) as a cofactor.

Its subcellular location is the nucleus. It catalyses the reaction ATP + (deoxyribonucleotide)n-3'-hydroxyl + 5'-phospho-(deoxyribonucleotide)m = (deoxyribonucleotide)n+m + AMP + diphosphate.. DNA ligase that seals nicks in double-stranded DNA during DNA replication, DNA recombination and DNA repair. The protein is DNA ligase 1 (lig1) of Dictyostelium discoideum (Social amoeba).